Here is a 141-residue protein sequence, read N- to C-terminus: Hemoglobin subunit alpha (141 aa).

The region spanning 2–141 is the Globin domain; sequence AFTACEKQTI…ICQELSSRYR (140 aa). His-59 provides a ligand contact to O2. His-88 contributes to the heme b binding site.

Belongs to the globin family. As to quaternary structure, heterotetramer of two alpha chains and two beta chains. As to expression, red blood cells.

Its function is as follows. Involved in oxygen transport from gills to the various peripheral tissues. The protein is Hemoglobin subunit alpha (HBA) of Mustelus griseus (Spotless smooth-hound).